Consider the following 133-residue polypeptide: p53 and DNA damage-regulated protein 1 (133 aa).

The protein belongs to the prefoldin subunit beta family. As to quaternary structure, component of the PAQosome complex which is responsible for the biogenesis of several protein complexes and which consists of R2TP complex members RUVBL1, RUVBL2, RPAP3 and PIH1D1, URI complex members PFDN2, PFDN6, PDRG1, UXT and URI1 as well as ASDURF, POLR2E and DNAAF10/WDR92. In terms of tissue distribution, predominantly expressed in normal testis and exhibits reduced but detectable expression in other organs.

It localises to the cytoplasm. May play a role in chaperone-mediated protein folding. The sequence is that of p53 and DNA damage-regulated protein 1 (PDRG1) from Homo sapiens (Human).